A 522-amino-acid chain; its full sequence is Cytochrome P450 4e5, mitochondrial (522 aa).

2 residues coordinate heme: Glu307 and Cys443.

This sequence belongs to the cytochrome P450 family. The cofactor is heme.

Its subcellular location is the mitochondrion. Its function is as follows. Probably involved in steroid hormones biosynthesis. This chain is Cytochrome P450 4e5, mitochondrial (Cyp4e5), found in Drosophila mettleri (Fruit fly).